Reading from the N-terminus, the 1288-residue chain is SH3 domain and tetratricopeptide repeat-containing protein 2 (1288 aa).

SH3 domains lie at 176-240 and 268-331; these read EGHF…PLPL and IGRG…PDSY. Positions 386-395 are enriched in polar residues; sequence NPPNDLSASQ. Disordered regions lie at residues 386 to 405 and 410 to 444; these read NPPN…VRPG and EHQA…LPEP. TPR repeat units follow at residues 528–561, 757–790, 836–869, 1001–1037, 1084–1118, 1119–1152, 1166–1199, and 1210–1244; these read ARLC…LNGA, RALC…GQLL, GVIY…AQEV, GRLL…FIDL, LKLY…LARR, LKAV…ATLA, LVAF…CPPW, and AKVY…AVLL.

Strongly expressed in brain and spinal cord. Expressed at equal level in spinal cord and sciatic nerve. Weakly expressed in striated muscle.

In Homo sapiens (Human), this protein is SH3 domain and tetratricopeptide repeat-containing protein 2 (SH3TC2).